The following is a 368-amino-acid chain: Isopentenyl-diphosphate delta-isomerase (368 aa).

7 to 8 (RK) contributes to the substrate binding site. FMN contacts are provided by residues Thr-65, 66-68 (GMT), Ser-96, and Asn-125. 96-98 (SQR) provides a ligand contact to substrate. Gln-160 is a substrate binding site. Glu-161 is a binding site for Mg(2+). FMN-binding positions include Lys-193, Ser-218, Thr-223, 275–277 (GIR), and 296–297 (AL).

It belongs to the IPP isomerase type 2 family. As to quaternary structure, homooctamer. Dimer of tetramers. FMN is required as a cofactor. Requires NADPH as cofactor. It depends on Mg(2+) as a cofactor.

The protein resides in the cytoplasm. The enzyme catalyses isopentenyl diphosphate = dimethylallyl diphosphate. Functionally, involved in the biosynthesis of isoprenoids. Catalyzes the 1,3-allylic rearrangement of the homoallylic substrate isopentenyl (IPP) to its allylic isomer, dimethylallyl diphosphate (DMAPP). This is Isopentenyl-diphosphate delta-isomerase from Saccharolobus islandicus (strain L.S.2.15 / Lassen #1) (Sulfolobus islandicus).